A 435-amino-acid polypeptide reads, in one-letter code: D-inositol 3-phosphate glycosyltransferase (435 aa).

Residue histidine 25 coordinates 1D-myo-inositol 3-phosphate. Residues 31–32 and glycine 39 each bind UDP-N-acetyl-alpha-D-glucosamine; that span reads QP. Residues 36–41, lysine 94, tyrosine 127, threonine 151, and arginine 171 each bind 1D-myo-inositol 3-phosphate; that span reads DAGGMN. 2 residues coordinate UDP-N-acetyl-alpha-D-glucosamine: arginine 245 and lysine 250. The Mg(2+) site is built by tyrosine 320, arginine 321, and alanine 323. UDP-N-acetyl-alpha-D-glucosamine-binding residues include glutamate 333 and glutamate 341. Residue threonine 347 participates in Mg(2+) binding.

This sequence belongs to the glycosyltransferase group 1 family. MshA subfamily. As to quaternary structure, homodimer.

It catalyses the reaction 1D-myo-inositol 3-phosphate + UDP-N-acetyl-alpha-D-glucosamine = 1D-myo-inositol 2-acetamido-2-deoxy-alpha-D-glucopyranoside 3-phosphate + UDP + H(+). Functionally, catalyzes the transfer of a N-acetyl-glucosamine moiety to 1D-myo-inositol 3-phosphate to produce 1D-myo-inositol 2-acetamido-2-deoxy-glucopyranoside 3-phosphate in the mycothiol biosynthesis pathway. In Streptosporangium roseum (strain ATCC 12428 / DSM 43021 / JCM 3005 / KCTC 9067 / NCIMB 10171 / NRRL 2505 / NI 9100), this protein is D-inositol 3-phosphate glycosyltransferase.